We begin with the raw amino-acid sequence, 293 residues long: Glutamine sensor pib2 (293 aa).

The segment at 38–75 is disordered; the sequence is APTRQATNGTGSVSGSPNSSSNSTPANQGSLPSHTNPQ. A compositionally biased stretch (low complexity) spans 44–62; that stretch reads TNGTGSVSGSPNSSSNSTP. The segment covering 63 to 75 has biased composition (polar residues); it reads ANQGSLPSHTNPQ. Residues 156-220 form an FYVE-type; degenerate zinc finger; that stretch reads DVSVCSFPSC…SCVSCFYEYL (65 aa). The Zn(2+) site is built by Cys-178, Cys-181, Cys-212, and Cys-215. The segment covering 242-256 has biased composition (polar residues); it reads APQQATTHPPSQPKN. Positions 242–276 are disordered; sequence APQQATTHPPSQPKNAVSVPIPKMDSTDSKGELPS. Position 259 is a phosphoserine (Ser-259).

As to quaternary structure, interacts with the TORC1 complex when activated by glutamine or cysteine.

The protein localises to the vacuole membrane. Its activity is regulated as follows. Activated by glutamine. Functionally, functions as an intracellular glutamine sensor that directly activates the TORC1 signaling pathway, to promote cell growth when glutamine is available. The polypeptide is Glutamine sensor pib2 (Schizosaccharomyces pombe (strain 972 / ATCC 24843) (Fission yeast)).